Reading from the N-terminus, the 430-residue chain is Centrosomal protein CEP57L1 (430 aa).

A Phosphoserine modification is found at S45. The stretch at 46–213 forms a coiled coil; that stretch reads PNNQALVSAL…HQRRLFQDRA (168 aa). 2 disordered regions span residues 248–290 and 362–430; these read CLKR…GEPF and RKLQ…KWEQ. 3 stretches are compositionally biased toward basic and acidic residues: residues 249-272, 362-372, and 421-430; these read LKRE…ERPP, RKLQEKVENSR, and LRRDDVKWEQ. A coiled-coil region spans residues 290 to 377; that stretch reads FSICDNLSEL…VENSRINESS (88 aa).

The protein belongs to the translokin family.

It is found in the cytoplasm. It localises to the cytoskeleton. The protein localises to the microtubule organizing center. Its subcellular location is the centrosome. Its function is as follows. Centrosomal protein which may be required for microtubule attachment to centrosomes. The sequence is that of Centrosomal protein CEP57L1 (Cep57l1) from Rattus norvegicus (Rat).